The following is a 240-amino-acid chain: UDP-2,3-diacylglucosamine hydrolase (240 aa).

Aspartate 8, histidine 10, aspartate 41, asparagine 79, and histidine 114 together coordinate Mn(2+). Asparagine 79 to arginine 80 serves as a coordination point for substrate. The substrate site is built by aspartate 122, serine 160, asparagine 164, lysine 167, and histidine 195. Mn(2+) contacts are provided by histidine 195 and histidine 197.

The protein belongs to the LpxH family. The cofactor is Mn(2+).

Its subcellular location is the cell inner membrane. It carries out the reaction UDP-2-N,3-O-bis[(3R)-3-hydroxytetradecanoyl]-alpha-D-glucosamine + H2O = 2-N,3-O-bis[(3R)-3-hydroxytetradecanoyl]-alpha-D-glucosaminyl 1-phosphate + UMP + 2 H(+). Its pathway is glycolipid biosynthesis; lipid IV(A) biosynthesis; lipid IV(A) from (3R)-3-hydroxytetradecanoyl-[acyl-carrier-protein] and UDP-N-acetyl-alpha-D-glucosamine: step 4/6. In terms of biological role, hydrolyzes the pyrophosphate bond of UDP-2,3-diacylglucosamine to yield 2,3-diacylglucosamine 1-phosphate (lipid X) and UMP by catalyzing the attack of water at the alpha-P atom. Involved in the biosynthesis of lipid A, a phosphorylated glycolipid that anchors the lipopolysaccharide to the outer membrane of the cell. This chain is UDP-2,3-diacylglucosamine hydrolase, found in Escherichia coli O7:K1 (strain IAI39 / ExPEC).